The primary structure comprises 138 residues: Lymphocyte antigen 6L (138 aa).

Positions 1-16 are cleaved as a signal peptide; it reads MERLVLTLCTLPLAVA. A glycan (N-linked (GlcNAc...) asparagine) is linked at N27. The UPAR/Ly6 domain occupies 28–122; the sequence is LSCYQCFKVS…TPQEGRWALR (95 aa). 2 disulfide bridges follow: C30-C47 and C103-C108. G117 is lipidated: GPI-anchor amidated glycine. Positions 118–138 are cleaved as a propeptide — removed in mature form; that stretch reads RWALRGGLLLQVGLSLLRALL.

It localises to the cell membrane. The protein is Lymphocyte antigen 6L of Homo sapiens (Human).